The chain runs to 216 residues: MRLILLGPPGAGKGTQAQRIVDKYGIPQLSTGDMLRAAVSAQTEVGKRAKAVMDAGKLVSDDIVIAIVSERIDQDDCSNGFILDGFPRTLIQADATEKMLAVKGLELSAVVEIRVEDEILADRIAGRYTCANCGTGYHDENLKPKVEGVCDKCGSTHFKRRPDDNRDTVKTRLQAYYKETSPLIGYYYAKGKLHSVDGMAEIDQVTAEIETVLSGL.

ATP is bound at residue 10 to 15; the sequence is GAGKGT. An NMP region spans residues 30–59; that stretch reads STGDMLRAAVSAQTEVGKRAKAVMDAGKLV. AMP contacts are provided by residues Thr31, Arg36, 57-59, 85-88, and Gln92; these read KLV and GFPR. An LID region spans residues 126–163; the sequence is GRYTCANCGTGYHDENLKPKVEGVCDKCGSTHFKRRPD. Arg127 serves as a coordination point for ATP. Zn(2+) is bound by residues Cys130, Cys133, Cys150, and Cys153. 2 residues coordinate AMP: Arg160 and Arg172. Ala200 lines the ATP pocket.

Belongs to the adenylate kinase family. Monomer.

The protein localises to the cytoplasm. The enzyme catalyses AMP + ATP = 2 ADP. The protein operates within purine metabolism; AMP biosynthesis via salvage pathway; AMP from ADP: step 1/1. Functionally, catalyzes the reversible transfer of the terminal phosphate group between ATP and AMP. Plays an important role in cellular energy homeostasis and in adenine nucleotide metabolism. In Allorhizobium ampelinum (strain ATCC BAA-846 / DSM 112012 / S4) (Agrobacterium vitis (strain S4)), this protein is Adenylate kinase.